A 548-amino-acid polypeptide reads, in one-letter code: 4-coumarate--CoA ligase CCL1 (548 aa).

ATP-binding positions include 195-203 (SSGTTGLPK), 337-342 (QGYGMT), Asp-426, 438-441 (IVDR), and Lys-532. The segment at 268 to 337 (EISKLLELIE…EKLPHAKLGQ (70 aa)) is SBD1. An SBD2 region spans residues 338–405 (GYGMTEAGPV…IRGKQIMKGY (68 aa)).

Belongs to the ATP-dependent AMP-binding enzyme family. In terms of tissue distribution, mostly expressed in glandular trichomes (lupulin glands) after flowering, and, to a lower extent, in stems, leaves, cones and flowers.

It localises to the cytoplasm. The enzyme catalyses (E)-4-coumarate + ATP + CoA = (E)-4-coumaroyl-CoA + AMP + diphosphate. The protein operates within secondary metabolite biosynthesis. Functionally, involved in the biosynthesis of prenylated phenolics natural products which contribute to the bitter taste of beer and display broad biological activities. Catalyzes the ligation of CoA on (E)-4-coumarate to produce (E)-4-coumaroyl-CoA. The polypeptide is 4-coumarate--CoA ligase CCL1 (Humulus lupulus (European hop)).